The following is a 340-amino-acid chain: MDKTLSQARTRVTISEVAQAAGVSKATVSRYIGGDRQLLADATAQRIEAVIEQLGYRPNRMASALKRGRTRLIGMLLADIRNPYSVAVMHGVETACREHGYSLVVCNTDCDDARERQHLQALQAYNVDGLIVNTLGHHAGELASLAQELPMVLVDRQLAELQTDLVGLDNADAVEQALDHLHACGYRDILAVSEPLDGTSSRQERVAAFQASIARRSGLRGQVLEVSANLPGQLAAFLASAGHGPQALFSCNGVATLEVMRHLHGRGEQLFQQLGLVALDDLDWYPLVGGGITALAQPTERIAAAAVQCLLERLQGSQLPARRLDLRAQLIVRGSTPIRN.

Residues 12 to 67 (VTISEVAQAAGVSKATVSRYIGGDRQLLADATAQRIEAVIEQLGYRPNRMASALKR) form the HTH lacI-type domain. A DNA-binding region (H-T-H motif) is located at residues 14-33 (ISEVAQAAGVSKATVSRYIG).

Homodimer.

With respect to regulation, 2-ketogluconate acts as a molecular effector and causes dissociation of PtxS from its target promoter. Glucose negatively affects the molecular binding of PtxS and 2KGA, and gluconic acid inhibits the PtxS-2KGA binding reaction. Its function is as follows. Involved in the regulation of 2-ketogluconic acid metabolism via the control of the expression of the kgu operon. Binds directly to a 14-bp palindrome sequence via its conserved HTH motif. The chain is HTH-type transcriptional regulator PtxS from Pseudomonas plecoglossicida.